The chain runs to 238 residues: Female-specific protein 800 (238 aa).

The segment covering 35–50 (YSYHHTYNNNNQGNYQ) has biased composition (low complexity). Disordered stretches follow at residues 35-112 (YSYH…KGGS) and 166-204 (NKRK…SKSP). Residues 97–106 (RNDQIQSRGN) show a composition bias toward polar residues. Over residues 171-187 (TKSEKNGRYIKKDHMNN) the composition is skewed to basic and acidic residues.

FS800 is likely to have some function in the production or maintenance of the schistosome egg. This chain is Female-specific protein 800, found in Schistosoma mansoni (Blood fluke).